The following is a 177-amino-acid chain: Large ribosomal subunit protein uL6 (177 aa).

This sequence belongs to the universal ribosomal protein uL6 family. As to quaternary structure, part of the 50S ribosomal subunit.

Functionally, this protein binds to the 23S rRNA, and is important in its secondary structure. It is located near the subunit interface in the base of the L7/L12 stalk, and near the tRNA binding site of the peptidyltransferase center. The sequence is that of Large ribosomal subunit protein uL6 from Mesorhizobium japonicum (strain LMG 29417 / CECT 9101 / MAFF 303099) (Mesorhizobium loti (strain MAFF 303099)).